The primary structure comprises 289 residues: N-acetylmuramoyl-L-alanine amidase AmiA (289 aa).

A signal peptide (tat-type signal) is located at residues Met1 to Ala34. The interval Glu36–Leu61 is disordered. Over residues Ser46–Ser55 the composition is skewed to basic residues. The region spanning Val59–Ile273 is the MurNAc-LAA domain.

It belongs to the N-acetylmuramoyl-L-alanine amidase 3 family. In terms of processing, predicted to be exported by the Tat system. The position of the signal peptide cleavage has not been experimentally proven.

The protein localises to the periplasm. It carries out the reaction Hydrolyzes the link between N-acetylmuramoyl residues and L-amino acid residues in certain cell-wall glycopeptides.. Functionally, cell-wall hydrolase involved in septum cleavage during cell division. This chain is N-acetylmuramoyl-L-alanine amidase AmiA (amiA), found in Salmonella typhimurium (strain LT2 / SGSC1412 / ATCC 700720).